The sequence spans 151 residues: Desiccation-related protein PCC27-45 (151 aa).

Belongs to the LEA type 2 family.

The sequence is that of Desiccation-related protein PCC27-45 from Craterostigma plantagineum (Blue gem).